We begin with the raw amino-acid sequence, 741 residues long: Nuclear poly(A) polymerase 4 (741 aa).

Residues Phe-101–Ser-103, Ala-113–Asp-116, Asp-114–Asp-116, Asp-169, Lys-230, Tyr-239, and Gly-248–Val-249 contribute to the ATP site. Residues Asp-114, Asp-116, and Asp-169 each coordinate Mg(2+). Residues Arg-485–Phe-492 carry the Nuclear localization signal motif. Disordered stretches follow at residues Phe-494–Gln-556 and Tyr-683–Thr-741. The segment covering Lys-534–Ala-551 has biased composition (basic and acidic residues). The segment covering Leu-701–Val-717 has biased composition (polar residues). Over residues Glu-721–Ser-731 the composition is skewed to basic and acidic residues. The span at Phe-732–Thr-741 shows a compositional bias: polar residues.

The protein belongs to the poly(A) polymerase family. Monomer. Forms a complex with cleavage and polyadenylation specificity factor (CPSF) subunits CFIS2, FIPS3, PAPS1, PABN1, PABN2, PABN3 and FIPS5. Mg(2+) is required as a cofactor. The cofactor is Mn(2+). Mostly expressed in flowers (very active in pollen, sepals, styles, and stigmas), cotyledons and hypocotyls, and, to a lower extent, in roots (confined to the vascular tissue in the radicle) and leaves (in the vascular tissue and leaf petioles). Barely detected in stems. Active in the primary and secondary root systems.

The protein resides in the nucleus. The enzyme catalyses RNA(n) + ATP = RNA(n)-3'-adenine ribonucleotide + diphosphate. Essential protein. Polymerase that creates the 3'-poly(A) tail of mRNA's. Also required for the endoribonucleolytic cleavage reaction at some polyadenylation sites. May acquire specificity through interaction with a cleavage and polyadenylation specificity factor (CPSF) at its C-terminus. This is Nuclear poly(A) polymerase 4 from Arabidopsis thaliana (Mouse-ear cress).